The following is a 334-amino-acid chain: MAQYKGTMREAGRAMHLIKKREKQKEQMEVLKQRIAEETIMKSKVDKKFSAHYDAVEAELKSSTVGLVTLNDMKAKQEALLREREMQLAKREQLEQRRIQLEMLREKERRRERKRKISNLSFTLDEEEGDQEDSRQAESAEAHSAGAKKNLGKNPDVDTSFLPDREREEEENRLREELRQEWEAKREKVKGEEVEITFSYWDGSGHRRTVRMSKGSTVQQFLKRALQGLRRDFRELRAAGVEQLMYVKEDLILPHYHTFYDFIVAKARGKSGPLFSFDVHDDVRLLSDATMEKDESHAGKVVLRSWYEKNKHIFPASRWEPYDPEKKWDRYTIR.

N-acetylalanine is present on Ala-2. Positions 122–175 (FTLDEEEGDQEDSRQAESAEAHSAGAKKNLGKNPDVDTSFLPDREREEEENRLR) are disordered. 2 stretches are compositionally biased toward basic and acidic residues: residues 132–141 (EDSRQAESAE) and 163–175 (PDRE…NRLR).

It belongs to the FAM50 family. Widely expressed. Abundant in testis, where it is expressed in seminiferous tubules, not in the interstitium. At the cellular level, expressed in primary spermatocytes and round spermatids, but not detectable in spermatogonia, elongating spermatids, mature spermatozoa, Sertoli cells or Leydig cells.

This chain is Protein FAM50B (Fam50b), found in Mus musculus (Mouse).